Reading from the N-terminus, the 895-residue chain is Zinc finger protein 281 (895 aa).

Disordered regions lie at residues 1 to 44 and 63 to 113; these read MKIG…EMEP and FTRP…AFPS. A Glycyl lysine isopeptide (Lys-Gly) (interchain with G-Cter in SUMO2) cross-link involves residue Lys-2. The span at 7-36 shows a compositional bias: gly residues; sequence FLSGGGGTGSSGGSGSGGGGSGGGGGGGSS. Residues Arg-65, Lys-101, and Lys-128 each participate in a glycyl lysine isopeptide (Lys-Gly) (interchain with G-Cter in SUMO2) cross-link. 2 stretches are compositionally biased toward basic and acidic residues: residues 130–140 and 202–218; these read EKPADPEEQQS and RTDDHHGTEEPKQDTNV. Disordered regions lie at residues 130–149 and 183–253; these read EKPADPEEQQSHHHHHHHHY and HVQQ…EGAI. Residues Lys-213, Lys-219, Lys-225, Lys-232, Lys-242, and Lys-259 each participate in a glycyl lysine isopeptide (Lys-Gly) (interchain with G-Cter in SUMO2) cross-link. C2H2-type zinc fingers lie at residues 261 to 283, 289 to 311, and 317 to 339; these read HICDHCSAAFRSSYHLRRHVLIH, FQCSQCSMGFIQKYLLQRHEKIH, and FGCDQCSMKFIQKYHMERHKRTH. Residues Lys-301 and Lys-325 each participate in a glycyl lysine isopeptide (Lys-Gly) (interchain with G-Cter in SUMO2) cross-link. The C2H2-type 4; atypical zinc finger occupies 345-367; it reads YKCDTCQQYFSRTDRLLKHRRTC. Lys-373 is covalently cross-linked (Glycyl lysine isopeptide (Lys-Gly) (interchain with G-Cter in SUMO2)). The tract at residues 377–427 is disordered; that stretch reads SAEPGSSNHTNMGNLAVLSQGNTSSSRRKTKSKSIAIENKEQKTGKTNESQ. Over residues 379 to 398 the composition is skewed to polar residues; that stretch reads EPGSSNHTNMGNLAVLSQGN. Ser-395 carries the phosphoserine modification. Residues Lys-409, Lys-416, Lys-460, and Lys-477 each participate in a glycyl lysine isopeptide (Lys-Gly) (interchain with G-Cter in SUMO2) cross-link. Ser-484 carries the phosphoserine modification. Residues Lys-493, Lys-498, Lys-539, Lys-599, Lys-617, and Lys-622 each participate in a glycyl lysine isopeptide (Lys-Gly) (interchain with G-Cter in SUMO2) cross-link. Residues 638–660 form a disordered region; that stretch reads SGEHSELVQEENLSPGTQTPSND. Positions 648–660 are enriched in polar residues; sequence ENLSPGTQTPSND. Ser-651 bears the Phosphoserine mark. Residues Lys-661 and Lys-670 each participate in a glycyl lysine isopeptide (Lys-Gly) (interchain with G-Cter in SUMO2) cross-link. Polar residues predominate over residues 778–789; the sequence is SSAFQSSSQKLT. Residues 778–817 are disordered; sequence SSAFQSSSQKLTSQKEQKNLESSTGFQIPSQELASQIDPQ. At Ser-785 the chain carries Phosphoserine. Glycyl lysine isopeptide (Lys-Gly) (interchain with G-Cter in SUMO2) cross-links involve residues Lys-787, Lys-792, and Lys-795. The span at 797–815 shows a compositional bias: polar residues; sequence LESSTGFQIPSQELASQID. Residue Ser-807 is modified to Phosphoserine. Residues Lys-818 and Lys-840 each participate in a glycyl lysine isopeptide (Lys-Gly) (interchain with G-Cter in SUMO2) cross-link. The residue at position 888 (Thr-888) is a Phosphothreonine.

This sequence belongs to the krueppel C2H2-type zinc-finger protein family.

It localises to the nucleus. Transcription repressor that plays a role in regulation of embryonic stem cells (ESCs) differentiation. Required for ESCs differentiation and acts by mediating autorepression of NANOG in ESCs: binds to the NANOG promoter and promotes association of NANOG protein to its own promoter and recruits the NuRD complex, which deacetylates histones. Not required for establishement and maintenance of ESCs. Represses the transcription of a number of genes including GAST, ODC1 and VIM. Binds to the G-rich box in the enhancer region of these genes. The protein is Zinc finger protein 281 (ZNF281) of Homo sapiens (Human).